Here is a 340-residue protein sequence, read N- to C-terminus: Glyceraldehyde-3-phosphate dehydrogenase, cytosolic (340 aa).

NAD(+)-binding positions include 16–17, aspartate 38, and arginine 85; that span reads RI. D-glyceraldehyde 3-phosphate is bound by residues 156–158, threonine 187, 216–217, and arginine 239; these read SCT and TG. Residue cysteine 157 is the Nucleophile of the active site. Asparagine 321 contacts NAD(+).

The protein belongs to the glyceraldehyde-3-phosphate dehydrogenase family. Homotetramer.

The protein localises to the cytoplasm. The enzyme catalyses D-glyceraldehyde 3-phosphate + phosphate + NAD(+) = (2R)-3-phospho-glyceroyl phosphate + NADH + H(+). It participates in carbohydrate degradation; glycolysis; pyruvate from D-glyceraldehyde 3-phosphate: step 1/5. Key enzyme in glycolysis that catalyzes the first step of the pathway by converting D-glyceraldehyde 3-phosphate (G3P) into 3-phospho-D-glyceroyl phosphate. Essential for the maintenance of cellular ATP levels and carbohydrate metabolism. The polypeptide is Glyceraldehyde-3-phosphate dehydrogenase, cytosolic (GAPC) (Pinus sylvestris (Scotch pine)).